The following is a 175-amino-acid chain: uncharacterized protein (175 aa).

Positions 10–157 constitute an HTH marR-type domain; it reads LFELYAELIH…AERLFRDLVT (148 aa). The H-T-H motif DNA-binding region spans 68–91; that stretch reads VTSIAEKMNTTKATVSRISTKLLG.

Its subcellular location is the cytoplasm. This is an uncharacterized protein from Bacillus subtilis (strain 168).